We begin with the raw amino-acid sequence, 263 residues long: Phosphatidylglycerol--prolipoprotein diacylglyceryl transferase (263 aa).

The next 4 helical transmembrane spans lie at 6–26 (VIFS…VLGI), 50–70 (LLTA…VLIY), 85–105 (TWEG…AVII), and 112–132 (IPIF…LFLG). Arg133 is a binding site for a 1,2-diacyl-sn-glycero-3-phospho-(1'-sn-glycerol). The next 3 membrane-spanning stretches (helical) occupy residues 169–189 (LYEA…LFFL), 197–217 (GALT…VEFF), and 233–253 (MGQL…LGAL).

It belongs to the Lgt family.

Its subcellular location is the cell membrane. It carries out the reaction L-cysteinyl-[prolipoprotein] + a 1,2-diacyl-sn-glycero-3-phospho-(1'-sn-glycerol) = an S-1,2-diacyl-sn-glyceryl-L-cysteinyl-[prolipoprotein] + sn-glycerol 1-phosphate + H(+). It functions in the pathway protein modification; lipoprotein biosynthesis (diacylglyceryl transfer). Functionally, catalyzes the transfer of the diacylglyceryl group from phosphatidylglycerol to the sulfhydryl group of the N-terminal cysteine of a prolipoprotein, the first step in the formation of mature lipoproteins. In Wolbachia sp. subsp. Drosophila simulans (strain wRi), this protein is Phosphatidylglycerol--prolipoprotein diacylglyceryl transferase.